Here is a 585-residue protein sequence, read N- to C-terminus: NADP-reducing hydrogenase subunit HndD (585 aa).

The region spanning 2 to 85 (SMLTITIDGK…NMVVKTNSLR (84 aa)) is the 2Fe-2S ferredoxin-type domain. Residues Cys-36, Cys-52, Cys-55, and Cys-69 each coordinate [2Fe-2S] cluster. The region spanning 85–124 (RVLNARRTVLELLLSDHPKDCLVCAKSGECELQTLAERFG) is the 4Fe-4S His(Cys)3-ligated-type domain. Positions 101, 105, 108, and 114 each coordinate [4Fe-4S] cluster. 4Fe-4S ferredoxin-type domains are found at residues 144 to 174 (ASII…VLSG) and 185 to 216 (PAFE…EHEY).

As to quaternary structure, heterotetramer composed of HndA, HndB, HndC and HndD subunits. HndD is probably the hydrogenase subunit. [4Fe-4S] cluster serves as cofactor.

The enzyme catalyses H2 + NADP(+) = NADPH + H(+). Inhibited by oxygen. Its function is as follows. Catalyzes the reduction of NADP in the presence of molecular H(2) to yield NADPH. In Solidesulfovibrio fructosivorans (Desulfovibrio fructosivorans), this protein is NADP-reducing hydrogenase subunit HndD (hndD).